A 266-amino-acid chain; its full sequence is MKEIKVIIAGPRGRMGHEAVLLMERTEHFNLVAAVDYKHGGEKISDLPGMPALDTPIYGDLHTCLEEVEADVLLDLTTPEVGKQHVTLAVERGLRSVIGTTGFTEEELKQLTETAKEKAVGTIIAPNFAIGAVLMMKFSQMAAKYFQDVEVIELHHDQKLDAPSGTAVKTVELIRQNRESKQQGHPNEVEQLEGARGANVDGIHIHSVRLPGLIAHQEVMFGGDGQMLTVRHDSFNRASFMSGVKLSIETVMNLDHLVYGLENIID.

NAD(+) is bound at residue 10–15 (GPRGRM). Lysine 38 provides a ligand contact to NADP(+). NAD(+) is bound by residues 99–101 (GTT) and 125–128 (APNF). Histidine 155 functions as the Proton donor/acceptor in the catalytic mechanism. Histidine 156 contacts (S)-2,3,4,5-tetrahydrodipicolinate. Lysine 159 (proton donor) is an active-site residue. Residue 165 to 166 (GT) participates in (S)-2,3,4,5-tetrahydrodipicolinate binding.

The protein belongs to the DapB family.

Its subcellular location is the cytoplasm. The enzyme catalyses (S)-2,3,4,5-tetrahydrodipicolinate + NAD(+) + H2O = (2S,4S)-4-hydroxy-2,3,4,5-tetrahydrodipicolinate + NADH + H(+). It carries out the reaction (S)-2,3,4,5-tetrahydrodipicolinate + NADP(+) + H2O = (2S,4S)-4-hydroxy-2,3,4,5-tetrahydrodipicolinate + NADPH + H(+). The protein operates within amino-acid biosynthesis; L-lysine biosynthesis via DAP pathway; (S)-tetrahydrodipicolinate from L-aspartate: step 4/4. In terms of biological role, catalyzes the conversion of 4-hydroxy-tetrahydrodipicolinate (HTPA) to tetrahydrodipicolinate. This Bacillus cereus (strain Q1) protein is 4-hydroxy-tetrahydrodipicolinate reductase.